A 391-amino-acid chain; its full sequence is Ferrochelatase (391 aa).

Fe cation contacts are provided by His196 and Glu281.

This sequence belongs to the ferrochelatase family.

It is found in the cytoplasm. It carries out the reaction heme b + 2 H(+) = protoporphyrin IX + Fe(2+). It participates in porphyrin-containing compound metabolism; protoheme biosynthesis; protoheme from protoporphyrin-IX: step 1/1. Its function is as follows. Catalyzes the ferrous insertion into protoporphyrin IX. The sequence is that of Ferrochelatase from Synechococcus sp. (strain WH7803).